Here is a 102-residue protein sequence, read N- to C-terminus: Large ribosomal subunit protein bL21 (102 aa).

This sequence belongs to the bacterial ribosomal protein bL21 family. Part of the 50S ribosomal subunit. Contacts protein L20.

This protein binds to 23S rRNA in the presence of protein L20. This is Large ribosomal subunit protein bL21 from Phytoplasma mali (strain AT).